The sequence spans 2593 residues: Citrinin polyketide synthase (2593 aa).

The N-terminal acylcarrier protein transacylase domain (SAT) stretch occupies residues Lys-70–Arg-224. Cys-139 (nucleophile; for transacylase activity) is an active-site residue. His-258 serves as the catalytic Proton donor/acceptor; for transacylase activity. The Ketosynthase family 3 (KS3) domain occupies Asp-391–Gln-806. Active-site for beta-ketoacyl synthase activity residues include Cys-555, His-690, and His-729. Positions Pro-906–Asn-1191 are malonyl-CoA:ACP transacylase (MAT) domain. Residues Pro-1291 to Ser-1424 are N-terminal hotdog fold. One can recognise a PKS/mFAS DH domain in the interval Pro-1291–Arg-1603. The segment at Leu-1322–Gly-1601 is product template (PT) domain. His-1326 acts as the Proton acceptor; for dehydratase activity in catalysis. Residues Val-1451–Arg-1603 form a C-terminal hotdog fold region. Catalysis depends on Asp-1508, which acts as the Proton donor; for dehydratase activity. Residues Val-1636–Pro-1662 form a disordered region. In terms of domain architecture, Carrier spans Ala-1661 to Leu-1738. Residue Ser-1689 is modified to O-(pantetheine 4'-phosphoryl)serine. Catalysis depends on for methyltransferase activity residues Tyr-1955, His-2067, and Glu-2093. A methyltransferase (CMeT) domain region spans residues Ile-1960–Ser-2134. Residues Pro-2215–Leu-2459 form an NADPH-binding (R) domain region.

Pantetheine 4'-phosphate serves as cofactor.

It functions in the pathway mycotoxin biosynthesis. Its function is as follows. Non-reducing polyketide synthase; part of the gene cluster that mediates the biosynthesis of the mycotoxin citrinin, a hepato-nephrotoxic compound to humans due to inhibition of respiration complex III. The pathway begins with the synthesis of a keto-aldehyde intermediate by the citrinin PKS (pksCT) from successive condensations of 4 malonyl-CoA units, presumably with a simple acetyl-CoA starter unit. Release of the keto-aldehyde intermediate is consistent with the presence of the C-terminal reductive release domain. Mp11 collaborates with pksCT by catalyzing the hydrolysis of ACP-bound acyl intermediates to free the ACP from stalled intermediates. Mpl2 then catalyzes the oxidation of the C-12 methyl of the ketone intermediate to an alcohol intermediate which is further oxidized by the oxidoreductase mpl7 to produce a bisaldehyde intermediate. The fourth catalytic step is catalyzed by the mpl4 aldehyde dehydrogenase. The final transformation is the reduction of C-3 by mpl6 to provide the chemically stable citrinin nucleus. In Monascus purpureus (Red mold), this protein is Citrinin polyketide synthase.